A 352-amino-acid chain; its full sequence is C-C chemokine receptor type 5 (352 aa).

Over 1 to 30 the chain is Extracellular; that stretch reads MDYQVSSPTYDIDYYTSEPCQKVNVKQIAA. Sulfotyrosine is present on Y3. O-linked (GalNAc...) serine glycans are attached at residues S6 and S7. Sulfotyrosine occurs at positions 10, 14, and 15. 2 disulfides stabilise this stretch: C20-C269 and C101-C178. A helical transmembrane segment spans residues 31 to 58; it reads RLLPPLYSLVFIFGFVGNILVVLILINC. Topologically, residues 59 to 68 are cytoplasmic; the sequence is KRLKSMTDIY. A helical transmembrane segment spans residues 69-89; that stretch reads LLNLAISDLFFLLTVPFWAHY. Topologically, residues 90–102 are extracellular; that stretch reads AAAQWDFGNTMCQ. Residues 103–124 traverse the membrane as a helical segment; that stretch reads LLTGLYFIGFFSGIFFIILLTI. Over 125–141 the chain is Cytoplasmic; that stretch reads DRYLAIVHAVFALKART. The helical transmembrane segment at 142–166 threads the bilayer; sequence VTFGVVTSVITWVVAVFASLPGIIF. Residues 167-198 lie on the Extracellular side of the membrane; the sequence is TRSQREGVHYTCSSHFPYSQYQFWKNFQTLKI. A helical membrane pass occupies residues 199 to 218; the sequence is VILGLVLPLLVMVICYSGIL. Topologically, residues 219 to 235 are cytoplasmic; that stretch reads KTLLRCRNEKKRHRAVR. A helical transmembrane segment spans residues 236-260; that stretch reads LIFTIMIVYFLFWAPYNIVLLLNTF. Topologically, residues 261–277 are extracellular; sequence QEFFGLNNCSSSNRLDQ. A helical membrane pass occupies residues 278 to 301; it reads AMQVTETLGMTHCCINPIIYAFVG. The Cytoplasmic segment spans residues 302–352; sequence EKFRNYLLVFFQKHIAKRFCKCCSIFQQEAPERASSVYTRSTGEQETSVGL. S-palmitoyl cysteine attachment occurs at residues C321, C323, and C324. Residues S336, S337, S342, and S349 each carry the phosphoserine; by BARK1 modification.

This sequence belongs to the G-protein coupled receptor 1 family. In terms of assembly, interacts with PRAF2. Efficient ligand binding to CCL3/MIP-1alpha and CCL4/MIP-1beta requires sulfation, O-glycosylation and sialic acid modifications. Glycosylation on Ser-6 is required for efficient binding of CCL4. Interacts with GRK2. Interacts with ARRB1 and ARRB2. Interacts with CNIH4. Interacts with S100A4; this interaction stimulates T-lymphocyte chemotaxis. Sulfated on at least 2 of the N-terminal tyrosines. Sulfation is required for efficient binding of the chemokines, CCL3 and CCL4. Post-translationally, palmitoylation in the C-terminal is important for cell surface expression. In terms of processing, phosphorylation on serine residues in the C-terminal is stimulated by binding CC chemokines especially by APO-RANTES. O-glycosylated, but not N-glycosylated. Ser-6 appears to be the major site even if Ser-7 may be also O-glycosylated. Also sialylated glycans present which contribute to chemokine binding. Thr-16 and Ser-17 may also be glycosylated and, if so, with small moieties such as a T-antigen.

Its subcellular location is the cell membrane. In terms of biological role, receptor for a number of inflammatory CC-chemokines including CCL3/MIP-1-alpha, CCL4/MIP-1-beta and RANTES and subsequently transduces a signal by increasing the intracellular calcium ion level. May play a role in the control of granulocytic lineage proliferation or differentiation. Participates in T-lymphocyte migration to the infection site by acting as a chemotactic receptor. The chain is C-C chemokine receptor type 5 (CCR5) from Rhinopithecus avunculus (Tonkin snub-nosed monkey).